Consider the following 156-residue polypeptide: Small ribosomal subunit protein uS7c (156 aa).

This sequence belongs to the universal ribosomal protein uS7 family. In terms of assembly, part of the 30S ribosomal subunit.

The protein resides in the plastid. The protein localises to the chloroplast. One of the primary rRNA binding proteins, it binds directly to 16S rRNA where it nucleates assembly of the head domain of the 30S subunit. This chain is Small ribosomal subunit protein uS7c (rps7), found in Stangeria eriopus (Natal grass cycad).